A 79-amino-acid chain; its full sequence is Putative defensin-like protein 309 (79 aa).

A signal peptide spans 1–19; sequence MKILAFFIFVLLIFSCSSS. Intrachain disulfides connect Cys31-Cys50, Cys37-Cys55, and Cys41-Cys57.

This sequence belongs to the DEFL family.

The protein localises to the secreted. This Arabidopsis thaliana (Mouse-ear cress) protein is Putative defensin-like protein 309.